Consider the following 619-residue polypeptide: Schlafen family member 12-like (619 aa).

A helical membrane pass occupies residues 598 to 618 (IFLFVCLFRFCLFVCLFVFFL).

The protein belongs to the Schlafen family.

It localises to the membrane. The chain is Schlafen family member 12-like (SLFN12L) from Pongo abelii (Sumatran orangutan).